Here is a 327-residue protein sequence, read N- to C-terminus: DNA-directed RNA polymerase subunit alpha (327 aa).

An alpha N-terminal domain (alpha-NTD) region spans residues 1 to 243 (MEKFLKYEIK…EHLNPIVNVN (243 aa)). The segment at 260–327 (RVRSFAKQIE…VHELGLKLRS (68 aa)) is alpha C-terminal domain (alpha-CTD).

This sequence belongs to the RNA polymerase alpha chain family. Homodimer. The RNAP catalytic core consists of 2 alpha, 1 beta, 1 beta' and 1 omega subunit. When a sigma factor is associated with the core the holoenzyme is formed, which can initiate transcription.

It carries out the reaction RNA(n) + a ribonucleoside 5'-triphosphate = RNA(n+1) + diphosphate. Its function is as follows. DNA-dependent RNA polymerase catalyzes the transcription of DNA into RNA using the four ribonucleoside triphosphates as substrates. In Mycoplasma pneumoniae (strain ATCC 29342 / M129 / Subtype 1) (Mycoplasmoides pneumoniae), this protein is DNA-directed RNA polymerase subunit alpha.